The primary structure comprises 1790 residues: Cytokinesis protein sepA (1790 aa).

Disordered stretches follow at residues 1–275 and 328–350; these read MPTS…YLTR and GEQK…GILE. The segment covering 24-35 has biased composition (basic and acidic residues); that stretch reads ERPVEDRWDAHG. 2 stretches are compositionally biased toward low complexity: residues 39–62 and 187–203; these read SLAP…SIQS and SHHS…SRMS. Residues 205–236 show a composition bias toward polar residues; that stretch reads DQASIHSSLSSNTRGSSYISTDGSSRTTLPSH. Positions 274 to 702 constitute a GBD/FH3 domain; sequence TRPRDDRVVD…YVAMDRRLPD (429 aa). Residues 328–341 show a composition bias toward basic and acidic residues; the sequence is GEQKRKQKARETHG. Positions 724 to 811 form a coiled coil; that stretch reads AEARRAYDES…QRNELETREL (88 aa). Positions 955–1136 constitute an FH1 domain; it reads DPEQATGLLG…NYLASQGAPS (182 aa). Residues 975–986 are compositionally biased toward basic and acidic residues; the sequence is ADDAKDEGKPTE. Disordered regions lie at residues 975–1119, 1465–1484, and 1596–1790; these read ADDA…PPGT, NLSD…ITQR, and RAAA…PSTS. Pro residues-rich tracts occupy residues 1015-1026 and 1033-1118; these read APPPPPPPPPAH and APPP…PPPG. The FH2 domain maps to 1141–1564; that stretch reads VMSSIRPKKK…TEASLARKRI (424 aa). Residues 1435–1566 adopt a coiled-coil conformation; sequence LQKLNVDQLR…ASLARKRINV (132 aa). The 33-residue stretch at 1581 to 1613 folds into the DAD domain; the sequence is SPATSGAMDSLLEKLRAAAPQAKDQRDRRRRAR. Residues 1608–1620 show a composition bias toward basic residues; sequence RRRRARLKERHQV. Residues 1644 to 1661 show a composition bias toward polar residues; that stretch reads SGATDTNATDSSLLSPTI. The span at 1694–1710 shows a compositional bias: basic and acidic residues; sequence PDPERTRRRRESAEEER. The segment covering 1720 to 1746 has biased composition (polar residues); it reads GATSGSKDSNDTTPLSPVTEPTSTQGE.

The protein belongs to the formin homology family. BNI1 subfamily.

In terms of biological role, involved in cytokinesis. Overexpression results in growth inhibition. This is Cytokinesis protein sepA (sepA) from Emericella nidulans (strain FGSC A4 / ATCC 38163 / CBS 112.46 / NRRL 194 / M139) (Aspergillus nidulans).